The sequence spans 85 residues: U4-theraphotoxin-Hhn1p (85 aa).

Positions 1 to 22 are cleaved as a signal peptide; that stretch reads MKMTLIAIPTCAAVLVLHTTAA. A propeptide spanning residues 23 to 48 is cleaved from the precursor; sequence EELEAESQLMEVGMPDTELEAVDGER. 3 cysteine pairs are disulfide-bonded: C52–C66, C56–C77, and C71–C82.

Belongs to the neurotoxin 12 (Hwtx-2) family. 02 (Hwtx-2) subfamily. Expressed by the venom gland.

The protein resides in the secreted. Postsynaptic neurotoxin. The protein is U4-theraphotoxin-Hhn1p of Cyriopagopus hainanus (Chinese bird spider).